Reading from the N-terminus, the 468-residue chain is ATP synthase subunit beta (468 aa).

148–155 (GGAGVGKT) lines the ATP pocket.

It belongs to the ATPase alpha/beta chains family. F-type ATPases have 2 components, CF(1) - the catalytic core - and CF(0) - the membrane proton channel. CF(1) has five subunits: alpha(3), beta(3), gamma(1), delta(1), epsilon(1). CF(0) has three main subunits: a(1), b(2) and c(9-12). The alpha and beta chains form an alternating ring which encloses part of the gamma chain. CF(1) is attached to CF(0) by a central stalk formed by the gamma and epsilon chains, while a peripheral stalk is formed by the delta and b chains.

The protein localises to the cell inner membrane. The enzyme catalyses ATP + H2O + 4 H(+)(in) = ADP + phosphate + 5 H(+)(out). In terms of biological role, produces ATP from ADP in the presence of a proton gradient across the membrane. The catalytic sites are hosted primarily by the beta subunits. This is ATP synthase subunit beta from Xanthomonas axonopodis pv. citri (strain 306).